A 300-amino-acid chain; its full sequence is GTP cyclohydrolase FolE2 (300 aa).

The protein belongs to the GTP cyclohydrolase IV family.

It carries out the reaction GTP + H2O = 7,8-dihydroneopterin 3'-triphosphate + formate + H(+). It participates in cofactor biosynthesis; 7,8-dihydroneopterin triphosphate biosynthesis; 7,8-dihydroneopterin triphosphate from GTP: step 1/1. In terms of biological role, converts GTP to 7,8-dihydroneopterin triphosphate. In Bacillus licheniformis (strain ATCC 14580 / DSM 13 / JCM 2505 / CCUG 7422 / NBRC 12200 / NCIMB 9375 / NCTC 10341 / NRRL NRS-1264 / Gibson 46), this protein is GTP cyclohydrolase FolE2.